The sequence spans 729 residues: ATP-dependent RNA helicase DHX15 homolog (729 aa).

A disordered region spans residues M1–S25. A Helicase ATP-binding domain is found at M82–P246. G95 to T102 is an ATP binding site. Positions D193 to H196 match the DEAH box motif. Residues T271–G451 form the Helicase C-terminal domain.

Belongs to the DEAD box helicase family. DEAH subfamily. DDX15/PRP43 sub-subfamily.

It catalyses the reaction ATP + H2O = ADP + phosphate + H(+). Functionally, RNA helicase involved in mRNA processing and antiviral innate immunity. Acts as an activator of the p38 MAPK cascade. The protein is ATP-dependent RNA helicase DHX15 homolog of Drosophila melanogaster (Fruit fly).